The following is a 951-amino-acid chain: Valine--tRNA ligase (951 aa).

A 'HIGH' region motif is present at residues 42 to 52 (PNVTGSLHMGH). Positions 554-558 (KMSKS) match the 'KMSKS' region motif. Residue Lys-557 participates in ATP binding. The stretch at 880-914 (AGLIDKAAELDRLAKEVAKLEAEIGRIESKLSNEG) forms a coiled coil.

The protein belongs to the class-I aminoacyl-tRNA synthetase family. ValS type 1 subfamily. In terms of assembly, monomer.

It localises to the cytoplasm. The catalysed reaction is tRNA(Val) + L-valine + ATP = L-valyl-tRNA(Val) + AMP + diphosphate. Functionally, catalyzes the attachment of valine to tRNA(Val). As ValRS can inadvertently accommodate and process structurally similar amino acids such as threonine, to avoid such errors, it has a 'posttransfer' editing activity that hydrolyzes mischarged Thr-tRNA(Val) in a tRNA-dependent manner. This is Valine--tRNA ligase from Pectobacterium atrosepticum (strain SCRI 1043 / ATCC BAA-672) (Erwinia carotovora subsp. atroseptica).